The following is a 416-amino-acid chain: Alpha-1,3/1,6-mannosyltransferase ALG2 (416 aa).

Topologically, residues 1–84 (MAEEQGRERD…LPRGLGWGGR (84 aa)) are cytoplasmic. The helical intramembrane region spans 85–105 (GAAVCAYVRMVFLALYVLFLA). The Cytoplasmic segment spans residues 106–416 (DEEFDVVVCD…LYRYVTKLLV (311 aa)).

The protein belongs to the glycosyltransferase group 1 family. Glycosyltransferase 4 subfamily.

Its subcellular location is the endoplasmic reticulum membrane. It catalyses the reaction a beta-D-Man-(1-&gt;4)-beta-D-GlcNAc-(1-&gt;4)-alpha-D-GlcNAc-diphospho-di-trans,poly-cis-dolichol + GDP-alpha-D-mannose = an alpha-D-Man-(1-&gt;3)-beta-D-Man-(1-&gt;4)-beta-D-GlcNAc-(1-&gt;4)-alpha-D-GlcNAc-diphospho-di-trans,poly-cis-dolichol + GDP + H(+). The catalysed reaction is an alpha-D-Man-(1-&gt;3)-beta-D-Man-(1-&gt;4)-beta-D-GlcNAc-(1-&gt;4)-alpha-D-GlcNAc-diphospho-di-trans,poly-cis-dolichol + GDP-alpha-D-mannose = an alpha-D-Man-(1-&gt;3)-[alpha-D-Man-(1-&gt;6)]-beta-D-Man-(1-&gt;4)-beta-D-GlcNAc-(1-&gt;4)-alpha-D-GlcNAc-diphospho-di-trans,poly-cis-dolichol + GDP + H(+). It carries out the reaction a beta-D-Man-(1-&gt;4)-beta-D-GlcNAc-(1-&gt;4)-alpha-D-GlcNAc-diphospho-di-trans,poly-cis-dolichol + GDP-alpha-D-mannose = an alpha-D-Man-(1-&gt;6)-beta-D-Man-(1-&gt;4)-beta-D-GlcNAc-(1-&gt;4)-alpha-D-GlcNAc-diphospho-di-trans,poly-cis-dolichol + GDP + H(+). The enzyme catalyses an alpha-D-Man-(1-&gt;6)-beta-D-Man-(1-&gt;4)-beta-D-GlcNAc-(1-&gt;4)-alpha-D-GlcNAc-diphospho-di-trans,poly-cis-dolichol + GDP-alpha-D-mannose = an alpha-D-Man-(1-&gt;3)-[alpha-D-Man-(1-&gt;6)]-beta-D-Man-(1-&gt;4)-beta-D-GlcNAc-(1-&gt;4)-alpha-D-GlcNAc-diphospho-di-trans,poly-cis-dolichol + GDP + H(+). It functions in the pathway protein modification; protein glycosylation. Functionally, mannosyltransferase that operates in the biosynthetic pathway of dolichol-linked oligosaccharides, the glycan precursors employed in protein asparagine (N)-glycosylation. The assembly of dolichol-linked oligosaccharides begins on the cytosolic side of the endoplasmic reticulum membrane and finishes in its lumen. The sequential addition of sugars to dolichol pyrophosphate produces dolichol-linked oligosaccharides containing fourteen sugars, including two GlcNAcs, nine mannoses and three glucoses. Once assembled, the oligosaccharide is transferred from the lipid to nascent proteins by oligosaccharyltransferases. Catalyzes, on the cytoplasmic face of the endoplasmic reticulum, the addition of the second and third mannose residues to the dolichol-linked oligosaccharide chain, to produce Man3GlcNAc(2)-PP-dolichol core oligosaccharide. Man3GlcNAc(2)-PP-dolichol is a substrate for ALG11, the following enzyme in the biosynthetic pathway. While both alpha 1,3 and alpha 1,6 linkages are possible, the sequential addition of alpha 1,3 followed by alpha 1,6 is probably the preferred route. This Homo sapiens (Human) protein is Alpha-1,3/1,6-mannosyltransferase ALG2 (ALG2).